A 92-amino-acid polypeptide reads, in one-letter code: Small ribosomal subunit protein uS19 (92 aa).

This sequence belongs to the universal ribosomal protein uS19 family.

In terms of biological role, protein S19 forms a complex with S13 that binds strongly to the 16S ribosomal RNA. This Proteus mirabilis (strain HI4320) protein is Small ribosomal subunit protein uS19.